A 295-amino-acid chain; its full sequence is Indole-3-glycerol phosphate synthase (295 aa).

This sequence belongs to the TrpC family.

The catalysed reaction is 1-(2-carboxyphenylamino)-1-deoxy-D-ribulose 5-phosphate + H(+) = (1S,2R)-1-C-(indol-3-yl)glycerol 3-phosphate + CO2 + H2O. Its pathway is amino-acid biosynthesis; L-tryptophan biosynthesis; L-tryptophan from chorismate: step 4/5. This chain is Indole-3-glycerol phosphate synthase, found in Prochlorococcus marinus subsp. pastoris (strain CCMP1986 / NIES-2087 / MED4).